The following is a 232-amino-acid chain: Pirin-like protein CC_1473 (232 aa).

It belongs to the pirin family.

The sequence is that of Pirin-like protein CC_1473 from Caulobacter vibrioides (strain ATCC 19089 / CIP 103742 / CB 15) (Caulobacter crescentus).